We begin with the raw amino-acid sequence, 452 residues long: UDP-N-acetylmuramoyl-tripeptide--D-alanyl-D-alanine ligase (452 aa).

G107 to S113 contributes to the ATP binding site.

It belongs to the MurCDEF family. MurF subfamily. In terms of assembly, monomer.

The protein localises to the cytoplasm. It catalyses the reaction D-alanyl-D-alanine + UDP-N-acetyl-alpha-D-muramoyl-L-alanyl-gamma-D-glutamyl-meso-2,6-diaminopimelate + ATP = UDP-N-acetyl-alpha-D-muramoyl-L-alanyl-gamma-D-glutamyl-meso-2,6-diaminopimeloyl-D-alanyl-D-alanine + ADP + phosphate + H(+). It functions in the pathway cell wall biogenesis; peptidoglycan biosynthesis. In terms of biological role, involved in cell wall formation. Catalyzes the final step in the synthesis of UDP-N-acetylmuramoyl-pentapeptide, the precursor of murein. In Escherichia coli (strain K12), this protein is UDP-N-acetylmuramoyl-tripeptide--D-alanyl-D-alanine ligase.